The chain runs to 500 residues: Squalene epoxidase ERG1 (500 aa).

A helical membrane pass occupies residues 20–40; it reads EADVVVVGAGVFGCTMAFALA. FAD-binding positions include 30–31, 50–51, Arg-58, Arg-145, Asp-332, and Met-345; these read VF and ER. 2 helical membrane-spanning segments follow: residues 450–470 and 474–494; these read AFLAIWLNACSVVGCGILGIF and LAIIDAVLILWKACIVFIPIM.

The protein belongs to the squalene monooxygenase family. FAD is required as a cofactor.

It localises to the microsome membrane. Its subcellular location is the endoplasmic reticulum membrane. The protein resides in the lipid droplet. It carries out the reaction squalene + reduced [NADPH--hemoprotein reductase] + O2 = (S)-2,3-epoxysqualene + oxidized [NADPH--hemoprotein reductase] + H2O + H(+). It participates in terpene metabolism; lanosterol biosynthesis; lanosterol from farnesyl diphosphate: step 2/3. Its pathway is steroid metabolism; ergosterol biosynthesis. In terms of biological role, squalene epoxidase; part of the third module of ergosterol biosynthesis pathway that includes the late steps of the pathway. ERG1 catalyzes the epoxidation of squalene into 2,3-epoxysqualene. The third module or late pathway involves the ergosterol synthesis itself through consecutive reactions that mainly occur in the endoplasmic reticulum (ER) membrane. Firstly, the squalene synthase ERG9 catalyzes the condensation of 2 farnesyl pyrophosphate moieties to form squalene, which is the precursor of all steroids. Squalene synthase is crucial for balancing the incorporation of farnesyl diphosphate (FPP) into sterol and nonsterol isoprene synthesis. Secondly, squalene is converted into lanosterol by the consecutive action of the squalene epoxidase ERG1 and the lanosterol synthase ERG7. Then, the delta(24)-sterol C-methyltransferase ERG6 methylates lanosterol at C-24 to produce eburicol. Eburicol is the substrate of the sterol 14-alpha demethylase encoded by CYP51A, CYP51B and CYP51C, to yield 4,4,24-trimethyl ergosta-8,14,24(28)-trienol. CYP51B encodes the enzyme primarily responsible for sterol 14-alpha-demethylation, and plays an essential role in ascospore formation. CYP51A encodes an additional sterol 14-alpha-demethylase, induced on ergosterol depletion and responsible for the intrinsic variation in azole sensitivity. The third CYP51 isoform, CYP51C, does not encode a sterol 14-alpha-demethylase, but is required for full virulence on host wheat ears. The C-14 reductase ERG24 then reduces the C14=C15 double bond which leads to 4,4-dimethylfecosterol. A sequence of further demethylations at C-4, involving the C-4 demethylation complex containing the C-4 methylsterol oxidases ERG25, the sterol-4-alpha-carboxylate 3-dehydrogenase ERG26 and the 3-keto-steroid reductase ERG27, leads to the production of fecosterol via 4-methylfecosterol. ERG28 has a role as a scaffold to help anchor ERG25, ERG26 and ERG27 to the endoplasmic reticulum. The C-8 sterol isomerase ERG2 then catalyzes the reaction which results in unsaturation at C-7 in the B ring of sterols and thus converts fecosterol to episterol. The sterol-C5-desaturases ERG3A and ERG3BB then catalyze the introduction of a C-5 double bond in the B ring to produce 5-dehydroepisterol. The C-22 sterol desaturases ERG5A and ERG5B further convert 5-dehydroepisterol into ergosta-5,7,22,24(28)-tetraen-3beta-ol by forming the C-22(23) double bond in the sterol side chain. Finally, ergosta-5,7,22,24(28)-tetraen-3beta-ol is substrate of the C-24(28) sterol reductase ERG4 to produce ergosterol. In Gibberella zeae (strain ATCC MYA-4620 / CBS 123657 / FGSC 9075 / NRRL 31084 / PH-1) (Wheat head blight fungus), this protein is Squalene epoxidase ERG1.